A 614-amino-acid polypeptide reads, in one-letter code: Zinc finger protein ztf-7 (614 aa).

A compositionally biased stretch (gly residues) spans 1–10 (MSTSGSGGGN). The tract at residues 1 to 160 (MSTSGSGGGN…SRPKKPEKMS (160 aa)) is disordered. Residues 18-41 (NVASSPNANPKKNADTESSGGSKN) are compositionally biased toward polar residues. Positions 54-69 (GSNSRNGSRTNSVSNS) are enriched in low complexity. Residues 74–83 (NRKDWTDRKS) show a composition bias toward basic and acidic residues. Positions 132-150 (DYSDEYELDEPFSDSDDED) are enriched in acidic residues. C2H2-type zinc fingers lie at residues 356 to 380 (NECIYCEKIFPDRNTLMDHMRKRNH) and 447 to 470 (VVCLLCDASEDNAQSLLEHMKTTH).

This sequence belongs to the ZNF277 family. Interacts with rps-2.

The protein resides in the cytoplasm. In terms of biological role, probable transcription factor. Limits the ability to tolerate cold environment or cold-warm stress. In complex with rps-2, mediates the cold-warm shock response by promoting translocation of components of the RNA exosome from the nucleolus to nucleoplasm. The protein is Zinc finger protein ztf-7 of Caenorhabditis elegans.